Consider the following 600-residue polypeptide: NADH-quinone oxidoreductase subunit C/D (600 aa).

The interval 1-190 (MVNNMTDLTA…DPFELTKAKQ (190 aa)) is NADH dehydrogenase I subunit C. Residues 214 to 600 (DFMFLNLGPN…IDFVMSDVDR (387 aa)) form an NADH dehydrogenase I subunit D region.

It in the N-terminal section; belongs to the complex I 30 kDa subunit family. The protein in the C-terminal section; belongs to the complex I 49 kDa subunit family. As to quaternary structure, NDH-1 is composed of 13 different subunits. Subunits NuoB, CD, E, F, and G constitute the peripheral sector of the complex.

The protein resides in the cell inner membrane. It catalyses the reaction a quinone + NADH + 5 H(+)(in) = a quinol + NAD(+) + 4 H(+)(out). Functionally, NDH-1 shuttles electrons from NADH, via FMN and iron-sulfur (Fe-S) centers, to quinones in the respiratory chain. The immediate electron acceptor for the enzyme in this species is believed to be ubiquinone. Couples the redox reaction to proton translocation (for every two electrons transferred, four hydrogen ions are translocated across the cytoplasmic membrane), and thus conserves the redox energy in a proton gradient. This is NADH-quinone oxidoreductase subunit C/D from Salmonella paratyphi C (strain RKS4594).